Reading from the N-terminus, the 200-residue chain is MELQVVGANALTVSETTFGREFNEALIHQVVVAYAAGARQGSRAQKTRAEVSGSGKKPWRQKGTGRARSGDIRSPIWRSGGVTFAAKPQDHSQKVNKKMYRGAIKSILSELVRQDRLVVVDKFEIDAPKTKVLVQKLKELALEDVLIITASLDENLFLAARNLYKVDVRDAQGIDPVSLIAFDKVVVTVDAVKQIEEMLA.

The disordered stretch occupies residues Arg43–Asp71.

This sequence belongs to the universal ribosomal protein uL4 family. Part of the 50S ribosomal subunit.

Functionally, one of the primary rRNA binding proteins, this protein initially binds near the 5'-end of the 23S rRNA. It is important during the early stages of 50S assembly. It makes multiple contacts with different domains of the 23S rRNA in the assembled 50S subunit and ribosome. Forms part of the polypeptide exit tunnel. The polypeptide is Large ribosomal subunit protein uL4 (Aggregatibacter actinomycetemcomitans (Actinobacillus actinomycetemcomitans)).